Reading from the N-terminus, the 100-residue chain is Nucleoid-associated protein MYPU_0500 (100 aa).

It belongs to the YbaB/EbfC family. As to quaternary structure, homodimer.

It localises to the cytoplasm. Its subcellular location is the nucleoid. Functionally, binds to DNA and alters its conformation. May be involved in regulation of gene expression, nucleoid organization and DNA protection. The chain is Nucleoid-associated protein MYPU_0500 from Mycoplasmopsis pulmonis (strain UAB CTIP) (Mycoplasma pulmonis).